The primary structure comprises 524 residues: Probable beta-1,4-xylosyltransferase IRX14 (524 aa).

Over M1–T51 the chain is Cytoplasmic. A disordered region spans residues A21–G41. Residues S24 to G41 show a composition bias toward gly residues. Residues F52–F71 traverse the membrane as a helical; Signal-anchor for type II membrane protein segment. The Lumenal segment spans residues S72–N524. Residues N132, N135, N240, and N353 are each glycosylated (N-linked (GlcNAc...) asparagine). Positions A492–N524 are disordered. Over residues V495–S513 the composition is skewed to basic and acidic residues.

The protein belongs to the glycosyltransferase 43 family.

Its subcellular location is the golgi apparatus membrane. Probable beta-1,4-xylosyltransferase involved in xylan biosynthesis in cell walls. This is Probable beta-1,4-xylosyltransferase IRX14 from Oryza sativa subsp. japonica (Rice).